The primary structure comprises 461 residues: ATP synthase subunit beta (461 aa).

Residue 151 to 158 participates in ATP binding; the sequence is GGAGVGKT.

This sequence belongs to the ATPase alpha/beta chains family. F-type ATPases have 2 components, CF(1) - the catalytic core - and CF(0) - the membrane proton channel. CF(1) has five subunits: alpha(3), beta(3), gamma(1), delta(1), epsilon(1). CF(0) has three main subunits: a(1), b(2) and c(9-12). The alpha and beta chains form an alternating ring which encloses part of the gamma chain. CF(1) is attached to CF(0) by a central stalk formed by the gamma and epsilon chains, while a peripheral stalk is formed by the delta and b chains.

It is found in the cell inner membrane. It catalyses the reaction ATP + H2O + 4 H(+)(in) = ADP + phosphate + 5 H(+)(out). Functionally, produces ATP from ADP in the presence of a proton gradient across the membrane. The catalytic sites are hosted primarily by the beta subunits. The chain is ATP synthase subunit beta from Colwellia psychrerythraea (strain 34H / ATCC BAA-681) (Vibrio psychroerythus).